The sequence spans 719 residues: Protein STRUBBELIG-RECEPTOR FAMILY 6 (719 aa).

The first 29 residues, 1 to 29 (MRENWAVVALFTLCIVGFELRFIHGATDA), serve as a signal peptide directing secretion. Residues 30 to 293 (SDTSALNTLF…SKKSGIGAGA (264 aa)) are Extracellular-facing. LRR repeat units lie at residues 97-118 (SLTELDLSSNNLGGDLPYQFPP), 119-140 (NLQRLNLANNQFTGAASYSLSQ), 143-164 (PLKYLNLGHNQFKGQIAIDFSK), 167-190 (SLTTLDFSFNSFTNSLPATFSSLT), 191-213 (SLKSLYLQNNQFSGTVDVLAGLP), and 214-234 (LETLNIANNDFTGWIPSSLKG). Residues 242–287 (NSFNTGPAPPPPPGTPPIRGSPSRKSGGRESRSSDESTRNGDSKKS) are disordered. The segment covering 248 to 257 (PAPPPPPGTP) has biased composition (pro residues). Over residues 268–286 (GGRESRSSDESTRNGDSKK) the composition is skewed to basic and acidic residues. Residues 294–314 (IAGIIISLLVVTALLVAFFLF) form a helical membrane-spanning segment. The Cytoplasmic segment spans residues 315–719 (RRKKSKRSSP…GSADTTSDYM (405 aa)). 2 disordered regions span residues 322–355 (SSPMDIEKTDNQPFTLASNDFHENNSIQSSSSVE) and 364–383 (SINLRPPPIDRNKSFDDEDS). The span at 332-354 (NQPFTLASNDFHENNSIQSSSSV) shows a compositional bias: polar residues. Residue S377 is modified to Phosphoserine. Residues 416–690 (FSVDNLLGEG…SEVVQALVVL (275 aa)) enclose the Protein kinase domain. Residues 422–430 (LGEGTFGRV) and K444 contribute to the ATP site. Residues 700-719 (TVGVDPSQRAGSADTTSDYM) are disordered. Residues 708-719 (RAGSADTTSDYM) show a composition bias toward polar residues.

The protein belongs to the protein kinase superfamily. Ser/Thr protein kinase family. In terms of tissue distribution, expressed in seedlings, roots, stems, leaves, flowers and siliques.

The protein localises to the membrane. The chain is Protein STRUBBELIG-RECEPTOR FAMILY 6 (SRF6) from Arabidopsis thaliana (Mouse-ear cress).